A 161-amino-acid chain; its full sequence is Gamma-glutamylaminecyclotransferase A (161 aa).

Residue 26–29 participates in substrate binding; the sequence is YGTL. Catalysis depends on E101, which acts as the Proton acceptor.

Belongs to the gamma-glutamylcyclotransferase family.

It carries out the reaction epsilon-(gamma-L-glutamyl)-L-lysine = 5-oxo-L-proline + L-lysine. May contribute to degradation of proteins cross-linked by transglutaminases by degrading the cross-link between a lysine and a glutamic acid residue. Catalyzes the formation of 5-oxo-L-proline from L-gamma-glutamyl-L-epsilon-lysine. This chain is Gamma-glutamylaminecyclotransferase A (ggact.1), found in Danio rerio (Zebrafish).